Consider the following 581-residue polypeptide: MYPEDSRGSGGVATVDFLEGTYDYAAPTPAPTPLYSHSTPGYYSAPLDAHGPPSDGSLQSLGSGPNSPLVFVPSSPRLSPFMHPPTHHYLETTSTPVYRSSVPSSQQSVSREDQCGTSDDSYSVGESGAGALAAGFEIAKEMRFCAVCSDYASGYHYGVWSCEGCKAFFKRSIQGHNDYMCPATNQCTIDRNRRKSCQACRLRKCYEVGMMKGGMRKDRGRVLRRDKQRTGTSDRDKASKGLEHRTAPPQDRRKHISSSAGGGGGKSSMISMPPDQVLLLLQGAEPPMLCSRQKLNRPYTEVTMMTLLTSMADKELVHMIAWAKKLPGFLQLSLHDQVQLLESSWLEVLMIGLIWRSIHCPGKLIFAQDLILDRSEGDCVEGMAEIFDMLLATASRFRMLKLKPEEFVCLKAIILLNSGAFSFCTGTMEPLHDGAAVQNMLDTITDALIHHINQSGCSAQQQSRRQAQLLLLLSHIRHMSNKGMEHLYSMKCKNKVPLYDLLLEMLDAHRIHRADRPAETWSQADREPPFTSRNSSGGGGGGGGGSSSAGSTSGPRVSHESPTSPGVLQYGGSRSECTHIL.

A modulating region spans residues 1-144; it reads MYPEDSRGSG…GFEIAKEMRF (144 aa). 2 disordered regions span residues 45–66 and 96–122; these read APLDAHGPPSDGSLQSLGSGPN and PVYRSSVPSSQQSVSREDQCGTSDDSY. Over residues 56-66 the composition is skewed to polar residues; that stretch reads GSLQSLGSGPN. Residues 100–109 are compositionally biased toward low complexity; sequence SSVPSSQQSV. 2 NR C4-type zinc fingers span residues 145-165 and 181-205; these read CAVCSDYASGYHYGVWSCEGC and CPATNQCTIDRNRRKSCQACRLRKC. Residues 145–210 constitute a DNA-binding region (nuclear receptor); the sequence is CAVCSDYASG…RLRKCYEVGM (66 aa). The segment at 211–272 is hinge; that stretch reads MKGGMRKDRG…GGGKSSMISM (62 aa). Positions 216–246 are enriched in basic and acidic residues; sequence RKDRGRVLRRDKQRTGTSDRDKASKGLEHRT. A disordered region spans residues 216–268; sequence RKDRGRVLRRDKQRTGTSDRDKASKGLEHRTAPPQDRRKHISSSAGGGGGKSS. Positions 273 to 509 constitute an NR LBD domain; it reads PPDQVLLLLQ…DLLLEMLDAH (237 aa). A compositionally biased stretch (basic and acidic residues) spans 516–528; that stretch reads RPAETWSQADREP. The interval 516 to 581 is disordered; it reads RPAETWSQAD…GSRSECTHIL (66 aa). Residues 536–547 show a composition bias toward gly residues; the sequence is SGGGGGGGGGSS.

The protein belongs to the nuclear hormone receptor family. NR3 subfamily. As to quaternary structure, binds DNA as a homodimer. Can form a heterodimer with ER-beta.

The protein localises to the nucleus. Functionally, the steroid hormones and their receptors are involved in the regulation of eukaryotic gene expression and affect cellular proliferation and differentiation in target tissues. This is Estrogen receptor (esr1) from Pagrus major (Red sea bream).